We begin with the raw amino-acid sequence, 84 residues long: MSDKIRTLQGRVVSDKMEKSIVVAIERFVKHPIYGKFIKRTTKLHVHDENNDSNIGDIVEISECRPISKTKSWTLVRVVEKAIL.

It belongs to the universal ribosomal protein uS17 family. In terms of assembly, part of the 30S ribosomal subunit.

In terms of biological role, one of the primary rRNA binding proteins, it binds specifically to the 5'-end of 16S ribosomal RNA. In Sodalis glossinidius (strain morsitans), this protein is Small ribosomal subunit protein uS17.